Consider the following 238-residue polypeptide: Ribonuclease 3 (238 aa).

The 131-residue stretch at 4-134 (PRQALLDAFG…LLGAIYLHHG (131 aa)) folds into the RNase III domain. A Mg(2+)-binding site is contributed by E44. D48 is an active-site residue. Positions 120 and 123 each coordinate Mg(2+). The active site involves E123. The DRBM domain occupies 161 to 229 (DWKTSLQELT…ASAAWKALDV (69 aa)).

Belongs to the ribonuclease III family. In terms of assembly, homodimer. It depends on Mg(2+) as a cofactor.

Its subcellular location is the cytoplasm. It carries out the reaction Endonucleolytic cleavage to 5'-phosphomonoester.. In terms of biological role, digests double-stranded RNA. Involved in the processing of primary rRNA transcript to yield the immediate precursors to the large and small rRNAs (23S and 16S). Processes some mRNAs, and tRNAs when they are encoded in the rRNA operon. Processes pre-crRNA and tracrRNA of type II CRISPR loci if present in the organism. The polypeptide is Ribonuclease 3 (Mycobacterium leprae (strain TN)).